Consider the following 311-residue polypeptide: Thioredoxin reductase (311 aa).

FAD contacts are provided by residues 31-39 (FEKGMPGGQ) and 32-39 (EKGMPGGQ). Cys-133 and Cys-136 are oxidised to a cystine. Position 281-290 (281-290 (DIRIFAPKQV)) interacts with FAD.

Belongs to the class-II pyridine nucleotide-disulfide oxidoreductase family. Homodimer. The cofactor is FAD.

It localises to the cytoplasm. The enzyme catalyses [thioredoxin]-dithiol + NADP(+) = [thioredoxin]-disulfide + NADPH + H(+). In Helicobacter pylori (strain J99 / ATCC 700824) (Campylobacter pylori J99), this protein is Thioredoxin reductase (trxB).